A 59-amino-acid chain; its full sequence is Large ribosomal subunit protein bL33 (59 aa).

The protein belongs to the bacterial ribosomal protein bL33 family.

The polypeptide is Large ribosomal subunit protein bL33 (Prosthecochloris aestuarii (strain DSM 271 / SK 413)).